A 142-amino-acid chain; its full sequence is Fluoride-specific ion channel FluC 1 (142 aa).

4 helical membrane passes run 17–37, 42–62, 80–100, and 109–129; these read AWVSAGSVVGGLTRYLVGLAL, GFPFATLFINATGSLIIGFYA, FVMTGFCGGYTTFSAFSLETF, and YIALAYVASSVVCWLVSVWLG. Na(+)-binding residues include Gly-87 and Thr-90.

This sequence belongs to the fluoride channel Fluc/FEX (TC 1.A.43) family.

The protein resides in the cell inner membrane. It carries out the reaction fluoride(in) = fluoride(out). Na(+) is not transported, but it plays an essential structural role and its presence is essential for fluoride channel function. In terms of biological role, fluoride-specific ion channel. Important for reducing fluoride concentration in the cell, thus reducing its toxicity. This chain is Fluoride-specific ion channel FluC 1, found in Bradyrhizobium diazoefficiens (strain JCM 10833 / BCRC 13528 / IAM 13628 / NBRC 14792 / USDA 110).